The following is a 345-amino-acid chain: Protein CHROMOSOME TRANSMISSION FIDELITY 7 (345 aa).

Residues 96–120 form a CCHH-type zinc finger; the sequence is RHCAECGAKYAPGDELDEKNHQSFH.

This sequence belongs to the acetyltransferase family. ECO subfamily. In terms of processing, autoacetylated. As to expression, expressed in roots, stems, leaves, young seedlings and flower buds. Detected in the embryo, but not in the endosperm.

It localises to the nucleus. Its subcellular location is the cytoplasm. Acetyltransferase required for the establishment of sister chromatid cohesion. Involved in preservation of genome integrity and meiosis. Required for DNA repair and for the regulation of chromosome segregation during mitotic cell division. Knock-down mutants are extremely dwarf. Regulator of sister chromatid cohesion in meiosis which negatively regulates cohesin association with chromatin, acting as an antagonist of WAPL1 and WAPL2. The polypeptide is Protein CHROMOSOME TRANSMISSION FIDELITY 7 (Arabidopsis thaliana (Mouse-ear cress)).